The primary structure comprises 249 residues: MNVLSCSINTLIKEGLYEISGVEVGQHFYWQIGGFQVHAQVLITSWVVIAILLGSAVLAIRNPQTIPTDGQNFFEFVLEFIRDVSQTQIGEEYGPWVPFIGTLFLFIFVSNWSGALLPWKIIQLPQGELAAPTNDINTTVALALLTSVAYFYAGLSKKGLGYFSKYIQPTPILLPINILEDFTKPLSLSFRLFGNILADELVVVVLVSLVPLVVPIPVMFLGLFTSGIQALIFATLAAAYIGESMEGHH.

Transmembrane regions (helical) follow at residues Gln-40–Ile-60, Val-97–Leu-117, Ile-136–Ser-156, Leu-201–Leu-221, and Gly-222–Gly-242.

Belongs to the ATPase A chain family. F-type ATPases have 2 components, CF(1) - the catalytic core - and CF(0) - the membrane proton channel. CF(1) has five subunits: alpha(3), beta(3), gamma(1), delta(1), epsilon(1). CF(0) has four main subunits: a, b, b' and c.

It is found in the plastid. The protein resides in the chloroplast thylakoid membrane. Key component of the proton channel; it plays a direct role in the translocation of protons across the membrane. The sequence is that of ATP synthase subunit a, chloroplastic from Lepidium virginicum (Virginia pepperweed).